A 367-amino-acid polypeptide reads, in one-letter code: Heme A synthase 2 (367 aa).

The next 5 helical transmembrane spans lie at 28-48, 114-134, 143-163, 180-200, and 221-241; these read MVAI…GIGA, MWGR…LWTG, WLVT…WMVA, VHYC…LTVL, and MAMG…FLSG. His284 is a binding site for heme. A run of 3 helical transmembrane segments spans residues 286 to 306, 314 to 334, and 340 to 360; these read LLGT…IRAD, AFLV…TTLV, and IGIV…WAWF. His344 serves as a coordination point for heme.

Belongs to the COX15/CtaA family. Type 2 subfamily. Interacts with CtaB. Requires heme b as cofactor.

The protein localises to the cell membrane. The catalysed reaction is Fe(II)-heme o + 2 A + H2O = Fe(II)-heme a + 2 AH2. It functions in the pathway porphyrin-containing compound metabolism; heme A biosynthesis; heme A from heme O: step 1/1. Its function is as follows. Catalyzes the conversion of heme O to heme A by two successive hydroxylations of the methyl group at C8. The first hydroxylation forms heme I, the second hydroxylation results in an unstable dihydroxymethyl group, which spontaneously dehydrates, resulting in the formyl group of heme A. In Acidiphilium cryptum (strain JF-5), this protein is Heme A synthase 2.